We begin with the raw amino-acid sequence, 109 residues long: Mannose-specific lectin (109 aa).

The 109-residue stretch at 1 to 109 (DNILYSSEVL…PPIWATGTGR (109 aa)) folds into the Bulb-type lectin domain. Cys29 and Cys52 form a disulfide bridge. A propeptide spanning residues 79–82 (TGTN) is cleaved from the precursor.

As to quaternary structure, homotrimer or homotetramer.

It localises to the secreted. In terms of biological role, mannose-specific lectin. Shows agglutinating activity toward rabbit erythrocytes and mitogenic activity towards mouse lymphocytes. In Aloe arborescens (Kidachi aloe), this protein is Mannose-specific lectin.